We begin with the raw amino-acid sequence, 178 residues long: Transcriptional repressor NrdR (178 aa).

Residues 1-21 (MRCPFCGHEDTQVKDSRPHED) form a disordered region. A zinc finger spans residues 3–34 (CPFCGHEDTQVKDSRPHEDGAAIRRRRICAAC). Residues 7–21 (GHEDTQVKDSRPHED) are compositionally biased toward basic and acidic residues. The ATP-cone domain maps to 49–139 (LYVVKADDRR…VHWDFRETKD (91 aa)).

The protein belongs to the NrdR family. Requires Zn(2+) as cofactor.

Functionally, negatively regulates transcription of bacterial ribonucleotide reductase nrd genes and operons by binding to NrdR-boxes. The chain is Transcriptional repressor NrdR from Gluconacetobacter diazotrophicus (strain ATCC 49037 / DSM 5601 / CCUG 37298 / CIP 103539 / LMG 7603 / PAl5).